The sequence spans 350 residues: Transmembrane protein 185B (350 aa).

The next 7 helical transmembrane spans lie at 16–36, 41–61, 81–101, 111–131, 168–188, 211–231, and 240–260; these read LIYT…DGII, WAVF…ASVG, FKAM…EVLV, FWLL…AACV, WLVV…VVLY, VTMA…EVLL, and TFSY…LMAT.

Belongs to the TMEM185 family.

Its subcellular location is the membrane. This Homo sapiens (Human) protein is Transmembrane protein 185B (TMEM185B).